A 251-amino-acid chain; its full sequence is PF03932 family protein CutC (251 aa).

The protein belongs to the CutC family.

The protein resides in the cytoplasm. The protein is PF03932 family protein CutC of Bacteroides fragilis (strain YCH46).